Here is a 284-residue protein sequence, read N- to C-terminus: Nucleotide-binding protein Sputcn32_0712 (284 aa).

8–15 (GRSGSGKS) is a binding site for ATP. Position 56–59 (56–59 (DVRN)) interacts with GTP.

This sequence belongs to the RapZ-like family.

Displays ATPase and GTPase activities. The polypeptide is Nucleotide-binding protein Sputcn32_0712 (Shewanella putrefaciens (strain CN-32 / ATCC BAA-453)).